Consider the following 236-residue polypeptide: Probable fimbrial chaperone EcpE (236 aa).

The N-terminal stretch at 1–27 (MFRRRGVTLTKALLTVVCMLAAPLTQA) is a signal peptide.

It belongs to the EcpB/EcpE family.

Functionally, part of the ecpRABCDE operon, which encodes the E.coli common pilus (ECP). ECP is found in both commensal and pathogenic strains and plays a dual role in early-stage biofilm development and host cell recognition. This Escherichia coli O18:K1:H7 (strain IHE3034 / ExPEC) protein is Probable fimbrial chaperone EcpE (ecpE).